Reading from the N-terminus, the 839-residue chain is Phenylalanine--tRNA ligase beta subunit (839 aa).

In terms of domain architecture, tRNA-binding spans 42-166 (GELTGPIVIG…PPSVEGHQLV (125 aa)). Positions 421 to 496 (PEMPRQTINA…RKIGFDRIKA (76 aa)) constitute a B5 domain. 4 residues coordinate Mg(2+): Asp-474, Asp-480, Glu-483, and Glu-484. One can recognise an FDX-ACB domain in the interval 745–838 (SSFPVAKEDV…AEETCGAQLR (94 aa)).

It belongs to the phenylalanyl-tRNA synthetase beta subunit family. Type 1 subfamily. As to quaternary structure, tetramer of two alpha and two beta subunits. Requires Mg(2+) as cofactor.

The protein resides in the cytoplasm. It carries out the reaction tRNA(Phe) + L-phenylalanine + ATP = L-phenylalanyl-tRNA(Phe) + AMP + diphosphate + H(+). The polypeptide is Phenylalanine--tRNA ligase beta subunit (Cutibacterium acnes (strain DSM 16379 / KPA171202) (Propionibacterium acnes)).